The following is a 383-amino-acid chain: WAT1-related protein At3g18200 (383 aa).

Residues 1–16 (MCYQTSKKKRRSRKRR) are compositionally biased toward basic residues. The disordered stretch occupies residues 1–23 (MCYQTSKKKRRSRKRRAQEEKEK). A run of 10 helical transmembrane segments spans residues 33–53 (VKLV…HIVS), 65–85 (VYPV…AYFF), 91–111 (PPLT…GITA), 126–146 (TFAS…ACAL), 158–178 (GVAK…ITLY), 204–224 (LTLG…WMVL), 237–257 (TLTS…ALFV), 272–292 (LFTI…LQTW), 300–320 (VFVA…AFLI), and 325–345 (LYSG…LVLW). EamA domains follow at residues 44–173 (FCFA…GGAT) and 216–344 (LSWA…YLVL).

This sequence belongs to the drug/metabolite transporter (DMT) superfamily. Plant drug/metabolite exporter (P-DME) (TC 2.A.7.4) family.

It is found in the membrane. This Arabidopsis thaliana (Mouse-ear cress) protein is WAT1-related protein At3g18200.